A 305-amino-acid polypeptide reads, in one-letter code: Coiled-coil domain-containing protein 50 (305 aa).

Alanine 2 is subject to N-acetylalanine. Serine 5 is subject to Phosphoserine. Residues glutamate 86 to histidine 130 are a coiled coil. Disordered regions lie at residues glutamine 122–aspartate 142 and lysine 218–glutamine 305. 2 stretches are compositionally biased toward basic and acidic residues: residues lysine 218–leucine 239 and lysine 247–serine 263. Residues threonine 279–glutamine 305 show a composition bias toward polar residues.

As to quaternary structure, interacts with RNF126. Post-translationally, phosphorylated on tyrosine residues. In terms of tissue distribution, widely expressed.

The protein resides in the cytoplasm. Involved in EGFR signaling. This chain is Coiled-coil domain-containing protein 50 (Ccdc50), found in Mus musculus (Mouse).